The following is a 67-amino-acid chain: ARDGYIAKPHNCVYECFDAFSSYCNGVCTKNGAKSGYCQILGIYGNGCWCIALPDNVPIRIPGKCHR.

The LCN-type CS-alpha/beta domain maps to 2 to 66 (RDGYIAKPHN…VPIRIPGKCH (65 aa)). Intrachain disulfides connect cysteine 12–cysteine 65, cysteine 16–cysteine 38, cysteine 24–cysteine 48, and cysteine 28–cysteine 50. Residue arginine 67 is a propeptide, removed by a carboxypeptidase.

The protein belongs to the long (4 C-C) scorpion toxin superfamily. Sodium channel inhibitor family. Alpha subfamily. Expressed by the venom gland.

Its subcellular location is the secreted. Alpha toxins bind voltage-independently at site-3 of sodium channels (Nav) and inhibit the inactivation of the activated channels, thereby blocking neuronal transmission. This is Sodium channel neurotoxin MeuNaTxalpha-10 from Mesobuthus eupeus (Lesser Asian scorpion).